A 315-amino-acid chain; its full sequence is MKANYSAEERFLLLGFSDWPSLQPVLFALVLLCYLLTLTGNSALVLLAVRDPRLHTPMYYFLCHLALVDAGFTTSVVPPLLANLRGPALWLPRSHCTAQLCASLALGSAECVLLAVMALDRAAAVCRPLRYAGLVSPRLCRTLASASWLSGLTNSVAQTALLAERPLCAPRLLDHFICELPALLKLACGGDGDTTENQMFAARVVILLLPFAVILASYGAVARAVCCMRFSGGRRRAVGTCGSHLTAVCLFYGSAIYTYLQPAQRYNQARGKFVSLFYTVVTPALNPLIYTLRNKKVKGAARRLLRSLGRGQAGQ.

The Extracellular portion of the chain corresponds to 1 to 24; it reads MKANYSAEERFLLLGFSDWPSLQP. The helical transmembrane segment at 25 to 48 threads the bilayer; the sequence is VLFALVLLCYLLTLTGNSALVLLA. Residues 49 to 56 lie on the Cytoplasmic side of the membrane; it reads VRDPRLHT. Residues 57-78 form a helical membrane-spanning segment; it reads PMYYFLCHLALVDAGFTTSVVP. Residues 79–99 are Extracellular-facing; sequence PLLANLRGPALWLPRSHCTAQ. Cysteines 96 and 188 form a disulfide. Residues 100–119 form a helical membrane-spanning segment; it reads LCASLALGSAECVLLAVMAL. Residues 120-138 are Cytoplasmic-facing; sequence DRAAAVCRPLRYAGLVSPR. Residues 139 to 157 form a helical membrane-spanning segment; the sequence is LCRTLASASWLSGLTNSVA. Topologically, residues 158-195 are extracellular; the sequence is QTALLAERPLCAPRLLDHFICELPALLKLACGGDGDTT. A helical transmembrane segment spans residues 196–219; sequence ENQMFAARVVILLLPFAVILASYG. At 220–236 the chain is on the cytoplasmic side; sequence AVARAVCCMRFSGGRRR. Residues 237–259 traverse the membrane as a helical segment; that stretch reads AVGTCGSHLTAVCLFYGSAIYTY. The Extracellular portion of the chain corresponds to 260–272; sequence LQPAQRYNQARGK. The chain crosses the membrane as a helical span at residues 273-292; that stretch reads FVSLFYTVVTPALNPLIYTL. The Cytoplasmic portion of the chain corresponds to 293-315; sequence RNKKVKGAARRLLRSLGRGQAGQ.

The protein belongs to the G-protein coupled receptor 1 family.

It localises to the cell membrane. Its function is as follows. Odorant receptor. The chain is Putative olfactory receptor 2I1 from Homo sapiens (Human).